The sequence spans 97 residues: MEARDIILRPVITEASTAAMDNKRYTFDVDLRATKTQVKNAVEEIFDVKVVKVNIMNVKGKQKRQGRYVGYTKRRRKAIVQLSADSNEIKLFGDDNE.

It belongs to the universal ribosomal protein uL23 family. As to quaternary structure, part of the 50S ribosomal subunit. Contacts protein L29, and trigger factor when it is bound to the ribosome.

In terms of biological role, one of the early assembly proteins it binds 23S rRNA. One of the proteins that surrounds the polypeptide exit tunnel on the outside of the ribosome. Forms the main docking site for trigger factor binding to the ribosome. In Limosilactobacillus fermentum (strain NBRC 3956 / LMG 18251) (Lactobacillus fermentum), this protein is Large ribosomal subunit protein uL23.